The sequence spans 374 residues: Probable neutral protease 2 homolog ARB_00849 (374 aa).

Positions 1 to 19 are cleaved as a signal peptide; that stretch reads MKFLTALSAIGALVATATA. Positions 20–189 are excised as a propeptide; that stretch reads AAVPNTPAKQ…KKSRGTIDKR (170 aa). 2 disulfide bridges follow: Cys-197–Cys-268 and Cys-275–Cys-293. Residue His-318 coordinates Zn(2+). Glu-319 is a catalytic residue. Residues His-322 and Asp-333 each coordinate Zn(2+).

The protein belongs to the peptidase M35 family. Zn(2+) serves as cofactor.

It is found in the secreted. The catalysed reaction is Preferential cleavage of bonds with hydrophobic residues in P1'. Also 3-Asn-|-Gln-4 and 8-Gly-|-Ser-9 bonds in insulin B chain.. Functionally, probable secreted metalloprotease that shows high activities on basic nuclear substrates such as histone and protamine. May be involved in virulence. The chain is Probable neutral protease 2 homolog ARB_00849 from Arthroderma benhamiae (strain ATCC MYA-4681 / CBS 112371) (Trichophyton mentagrophytes).